The following is a 184-amino-acid chain: Large ribosomal subunit protein uL5c (184 aa).

This sequence belongs to the universal ribosomal protein uL5 family. As to quaternary structure, part of the 50S ribosomal subunit; contacts the 5S rRNA.

The protein localises to the plastid. Its subcellular location is the chloroplast. Functionally, binds 5S rRNA, forms part of the central protuberance of the 50S subunit. In Ostreococcus tauri, this protein is Large ribosomal subunit protein uL5c (rpl5).